We begin with the raw amino-acid sequence, 526 residues long: UDP-N-acetylmuramoyl-L-alanyl-D-glutamate--2,6-diaminopimelate ligase (526 aa).

2 residues coordinate UDP-N-acetyl-alpha-D-muramoyl-L-alanyl-D-glutamate: Leu48 and Ser50. 136–142 (GTSGKTT) is an ATP binding site. UDP-N-acetyl-alpha-D-muramoyl-L-alanyl-D-glutamate contacts are provided by residues 178–179 (TT), Ser205, and Arg213. Lys245 carries the N6-carboxylysine modification. Meso-2,6-diaminopimelate contacts are provided by residues Arg408, 432-435 (DNPR), Gly490, and Glu494. The short motif at 432-435 (DNPR) is the Meso-diaminopimelate recognition motif element.

It belongs to the MurCDEF family. MurE subfamily. Mg(2+) serves as cofactor. In terms of processing, carboxylation is probably crucial for Mg(2+) binding and, consequently, for the gamma-phosphate positioning of ATP.

It localises to the cytoplasm. It catalyses the reaction UDP-N-acetyl-alpha-D-muramoyl-L-alanyl-D-glutamate + meso-2,6-diaminopimelate + ATP = UDP-N-acetyl-alpha-D-muramoyl-L-alanyl-gamma-D-glutamyl-meso-2,6-diaminopimelate + ADP + phosphate + H(+). It functions in the pathway cell wall biogenesis; peptidoglycan biosynthesis. Catalyzes the addition of meso-diaminopimelic acid to the nucleotide precursor UDP-N-acetylmuramoyl-L-alanyl-D-glutamate (UMAG) in the biosynthesis of bacterial cell-wall peptidoglycan. This Corynebacterium efficiens (strain DSM 44549 / YS-314 / AJ 12310 / JCM 11189 / NBRC 100395) protein is UDP-N-acetylmuramoyl-L-alanyl-D-glutamate--2,6-diaminopimelate ligase.